We begin with the raw amino-acid sequence, 352 residues long: C-X-C chemokine receptor type 4 (352 aa).

The interval 1–21 is important for chemokine binding and signaling; that stretch reads MEGISIYTSDNYTEEMGSGDY. Over 1-38 the chain is Extracellular; sequence MEGISIYTSDNYTEEMGSGDYDSIKEPCFREENAHFNR. Residue Y7 is modified to Sulfotyrosine. A glycan (N-linked (GlcNAc...) asparagine) is linked at N11. Y12 is subject to Sulfotyrosine. O-linked (Xyl...) (chondroitin sulfate) serine glycosylation occurs at S18. At Y21 the chain carries Sulfotyrosine. 2 disulfide bridges follow: C28-C274 and C109-C186. The chain crosses the membrane as a helical span at residues 39–63; the sequence is IFLPTIYSIIFLTGIVGNGLVILVM. Over 64–77 the chain is Cytoplasmic; it reads GYQKKLRSMTDKYR. Residues 78–99 traverse the membrane as a helical segment; sequence LHLSVADLLFVITLPFWAVDAV. Positions 94–97 are chemokine binding; sequence WAVD. Topologically, residues 100–110 are extracellular; the sequence is ANWYFGNFLCK. A helical transmembrane segment spans residues 111-130; the sequence is AVHVIYTVNLYSSVLILAFI. A chemokine binding region spans residues 113-117; it reads HVIYT. Residues 131–154 are Cytoplasmic-facing; it reads SLDRYLAIVHATNSQKPRKLLAEK. Residues 133-135 carry the Important for signaling motif; that stretch reads DRY. Residues 135–147 are involved in dimerization; when bound to chemokine; that stretch reads YLAIVHATNSQKP. The helical transmembrane segment at 155–174 threads the bilayer; that stretch reads VVYVGVWIPALLLTIPDFIF. Residues 175-195 lie on the Extracellular side of the membrane; sequence ASVSEADDRYICDRFYPNDLW. Positions 186 to 190 are chemokine binding, important for signaling; the sequence is CDRFY. Residues 191 to 210 form an involved in dimerization region; it reads PNDLWVVVFQFQHIMVGLIL. The helical transmembrane segment at 196-216 threads the bilayer; it reads VVVFQFQHIMVGLILPGIVIL. At 217-241 the chain is on the cytoplasmic side; it reads SCYCIIISKLSHSKGHQKRKALKTT. A helical transmembrane segment spans residues 242 to 261; that stretch reads VILILAFFACWLPYYIGISI. At 262 to 282 the chain is on the extracellular side; that stretch reads DSFILLEIIKQGCEFENTVHK. Residues 266–268 form an involved in dimerization region; the sequence is LLE. The chain crosses the membrane as a helical span at residues 283–302; that stretch reads WISITEALAFFHCCLNPILY. The Cytoplasmic portion of the chain corresponds to 303–352; sequence AFLGAKFKTSAQHALTSVSRGSSLKILSKGKRGGHSSVSTESESSSFHSS. 2 positions are modified to phosphoserine: S319 and S321. Phosphoserine; by PKC and GRK6 is present on residues S324 and S325. Residues 329-352 are disordered; that stretch reads LSKGKRGGHSSVSTESESSSFHSS. At S330 the chain carries Phosphoserine; by GRK6. Residue K331 forms a Glycyl lysine isopeptide (Lys-Gly) (interchain with G-Cter in ubiquitin) linkage. Residues 337–352 show a composition bias toward low complexity; the sequence is HSSVSTESESSSFHSS. The residue at position 339 (S339) is a Phosphoserine; by GRK6. 2 positions are modified to phosphoserine: S348 and S351.

This sequence belongs to the G-protein coupled receptor 1 family. In terms of assembly, monomer. Can form homodimers. Interacts with CD164. Interacts with ARRB2; the interaction is dependent on the C-terminal phosphorylation of CXCR4 and allows activation of MAPK1 and MAPK3. Interacts with ARR3; the interaction is dependent on the C-terminal phosphorylation of CXCR4 and modulates calcium mobilization. Interacts with RNF113A; the interaction, enhanced by CXCL12, promotes CXCR4 ubiquitination and subsequent degradation. Interacts (via the cytoplasmic C-terminal) with ITCH (via the WW domains I and II); the interaction, enhanced by CXCL12, promotes CXCR4 ubiquitination and leads to its degradation. Interacts with extracellular ubiquitin. Interacts with DBN1; this interaction is enhanced by antigenic stimulation. Following LPS binding, may form a complex with GDF5, HSP90AA1 and HSPA8. In terms of processing, phosphorylated on agonist stimulation. Rapidly phosphorylated on serine and threonine residues in the C-terminal. Phosphorylation at Ser-324 and Ser-325 leads to recruitment of ITCH, ubiquitination and protein degradation. Ubiquitinated after ligand binding, leading to its degradation. Ubiquitinated by ITCH at the cell membrane on agonist stimulation. The ubiquitin-dependent mechanism, endosomal sorting complex required for transport (ESCRT), then targets CXCR4 for lysosomal degradation. This process is dependent also on prior Ser-/Thr-phosphorylation in the C-terminal of CXCR4. Also binding of ARRB1 to STAM negatively regulates CXCR4 sorting to lysosomes though modulating ubiquitination of SFR5S. Post-translationally, sulfation is required for efficient binding of CXCL12/SDF-1alpha and promotes its dimerization. In terms of processing, O- and N-glycosylated. N-glycosylation can mask coreceptor function. The O-glycosylation chondroitin sulfate attachment does not affect interaction with CXCL12/SDF-1alpha nor its coreceptor activity.

The protein localises to the cell membrane. It localises to the cell junction. The protein resides in the early endosome. Its subcellular location is the late endosome. It is found in the lysosome. Its function is as follows. Receptor for the C-X-C chemokine CXCL12/SDF-1 that transduces a signal by increasing intracellular calcium ion levels and enhancing MAPK1/MAPK3 activation. Involved in the AKT signaling cascade. Plays a role in regulation of cell migration, e.g. during wound healing. Acts as a receptor for extracellular ubiquitin; leading to enhanced intracellular calcium ions and reduced cellular cAMP levels. Binds bacterial lipopolysaccharide (LPS) et mediates LPS-induced inflammatory response, including TNF secretion by monocytes. Involved in hematopoiesis and in cardiac ventricular septum formation. Also plays an essential role in vascularization of the gastrointestinal tract, probably by regulating vascular branching and/or remodeling processes in endothelial cells. Involved in cerebellar development. In the CNS, could mediate hippocampal-neuron survival. The sequence is that of C-X-C chemokine receptor type 4 (CXCR4) from Macaca fascicularis (Crab-eating macaque).